The primary structure comprises 146 residues: Ribonuclease H (146 aa).

In terms of domain architecture, RNase H type-1 spans 4 to 145 (ELNKVVIYTD…ADMLARSQIV (142 aa)). Residues Asp-13, Glu-51, Asp-73, and Asp-137 each coordinate Mg(2+).

It belongs to the RNase H family. In terms of assembly, monomer. Mg(2+) serves as cofactor.

Its subcellular location is the cytoplasm. The enzyme catalyses Endonucleolytic cleavage to 5'-phosphomonoester.. Endonuclease that specifically degrades the RNA of RNA-DNA hybrids. This is Ribonuclease H from Ehrlichia chaffeensis (strain ATCC CRL-10679 / Arkansas).